We begin with the raw amino-acid sequence, 131 residues long: Sec-independent protein translocase protein TatB (131 aa).

A helical membrane pass occupies residues 2–22; it reads FANIGWGEMLVLVMVGLVVLG. Residues 90-131 form a disordered region; sequence DSLFTGDFDRPTPKKPDAAGSAGPDATEQIGAGPIPFDSDAT. Over residues 96–106 the composition is skewed to basic and acidic residues; it reads DFDRPTPKKPD.

Belongs to the TatB family. The Tat system comprises two distinct complexes: a TatABC complex, containing multiple copies of TatA, TatB and TatC subunits, and a separate TatA complex, containing only TatA subunits. Substrates initially bind to the TatABC complex, which probably triggers association of the separate TatA complex to form the active translocon.

The protein localises to the cell membrane. In terms of biological role, part of the twin-arginine translocation (Tat) system that transports large folded proteins containing a characteristic twin-arginine motif in their signal peptide across membranes. Together with TatC, TatB is part of a receptor directly interacting with Tat signal peptides. TatB may form an oligomeric binding site that transiently accommodates folded Tat precursor proteins before their translocation. This is Sec-independent protein translocase protein TatB from Mycobacterium bovis (strain ATCC BAA-935 / AF2122/97).